The following is a 146-amino-acid chain: Large ribosomal subunit protein uL15 (146 aa).

Over residues 1-18 the composition is skewed to basic and acidic residues; it reads MKLHELKPSEGSRKERNR. The tract at residues 1-50 is disordered; that stretch reads MKLHELKPSEGSRKERNRVGRGTGSGNGKTSGRGHKGQKARSGGGVRLGF. Residues 21-31 show a composition bias toward gly residues; that stretch reads RGTGSGNGKTS.

Belongs to the universal ribosomal protein uL15 family. As to quaternary structure, part of the 50S ribosomal subunit.

Functionally, binds to the 23S rRNA. The polypeptide is Large ribosomal subunit protein uL15 (Listeria innocua serovar 6a (strain ATCC BAA-680 / CLIP 11262)).